The chain runs to 462 residues: Probable Xaa-Pro aminopeptidase pepP (462 aa).

Mn(2+) is bound by residues D259, D270, E393, and E433.

Belongs to the peptidase M24B family. It depends on Mn(2+) as a cofactor.

It catalyses the reaction Release of any N-terminal amino acid, including proline, that is linked to proline, even from a dipeptide or tripeptide.. Functionally, catalyzes the removal of a penultimate prolyl residue from the N-termini of peptides. In Metarhizium robertsii (strain ARSEF 23 / ATCC MYA-3075) (Metarhizium anisopliae (strain ARSEF 23)), this protein is Probable Xaa-Pro aminopeptidase pepP (pepP).